The sequence spans 701 residues: Translation factor GUF1, mitochondrial (701 aa).

The transit peptide at 1–29 directs the protein to the mitochondrion; that stretch reads MSCCKGLTPQCVRVRLPRRPALSHPARLY. Low complexity predominate over residues 23-50; sequence SHPARLYSSSSSSNSHSSPSRPRLLSRP. The tract at residues 23-85 is disordered; sequence SHPARLYSSS…RSSHHSSAPM (63 aa). Residues 98-283 form the tr-type G domain; sequence ERYRNFCVIA…AVIEQIPHPT (186 aa). GTP-binding positions include 107–114, 172–176, and 226–229; these read AHVDHGKS, DTPGH, and NKID.

The protein belongs to the TRAFAC class translation factor GTPase superfamily. Classic translation factor GTPase family. LepA subfamily.

It is found in the mitochondrion inner membrane. It catalyses the reaction GTP + H2O = GDP + phosphate + H(+). Functionally, promotes mitochondrial protein synthesis. May act as a fidelity factor of the translation reaction, by catalyzing a one-codon backward translocation of tRNAs on improperly translocated ribosomes. Binds to mitochondrial ribosomes in a GTP-dependent manner. The polypeptide is Translation factor GUF1, mitochondrial (Pyricularia oryzae (strain 70-15 / ATCC MYA-4617 / FGSC 8958) (Rice blast fungus)).